A 113-amino-acid chain; its full sequence is Ig kappa chain V-II region 17S29.1 (113 aa).

The segment at 1-23 (DIVMTQAVFSNPVTLGTSASISC) is framework-1. Cysteine 23 and cysteine 93 are joined by a disulfide. The interval 24-39 (RSSKSLLHSNGITYLY) is complementarity-determining-1. A framework-2 region spans residues 40–54 (WYLQKPGQSPQLLLY). Residues 55–61 (QMSNLAS) are complementarity-determining-2. The tract at residues 62–93 (GVPDRFSSSGSGTDFTLRISRVEAEDVGVYYC) is framework-3. The segment at 94-102 (AHNLELPYT) is complementarity-determining-3. The segment at 103–112 (FGGGTKLEIK) is framework-4.

Functionally, anti-streptococcal group A carbohydrate antibody. The polypeptide is Ig kappa chain V-II region 17S29.1 (Mus musculus (Mouse)).